Consider the following 1425-residue polypeptide: Protein NAP1 (1425 aa).

Composition is skewed to polar residues over residues 1–20 (MANS…PTSV), 1299–1312 (TPLS…SPSV), and 1320–1329 (SMKNSTTPQR). Disordered stretches follow at residues 1 to 24 (MANS…RSRE) and 1299 to 1425 (TPLS…KQHN). Over residues 1362 to 1405 (SETGNSRNNENNNNNKQRGSSRRSGPLDYSSSHKGGSGSNSTGP) the composition is skewed to low complexity.

It belongs to the HEM-1/HEM-2 family. As to quaternary structure, binds PIR. As to expression, expressed in roots, root hairs, hypocotyls, cotyledons, stems, leaves, trichomes, and flowers.

Involved in regulation of actin and microtubule organization. Part of a WAVE complex that activates the Arp2/3 complex. This is Protein NAP1 (NAP1) from Arabidopsis thaliana (Mouse-ear cress).